Here is a 230-residue protein sequence, read N- to C-terminus: Cytidylate kinase (230 aa).

12–20 serves as a coordination point for ATP; the sequence is GPSGAGKST.

This sequence belongs to the cytidylate kinase family. Type 1 subfamily.

It is found in the cytoplasm. The catalysed reaction is CMP + ATP = CDP + ADP. It catalyses the reaction dCMP + ATP = dCDP + ADP. The sequence is that of Cytidylate kinase from Corynebacterium diphtheriae (strain ATCC 700971 / NCTC 13129 / Biotype gravis).